Reading from the N-terminus, the 188-residue chain is NADH-quinone oxidoreductase subunit I 2 (188 aa).

4Fe-4S ferredoxin-type domains follow at residues 56–88 (HFLKRDDEGEIKCVACELCARICPCDCIEVVPY) and 98–127 (AKFEIDTARCLFCGLCEDACPADAIALGQQ). Residues C68, C71, C74, C78, C107, C110, C113, and C117 each coordinate [4Fe-4S] cluster.

This sequence belongs to the complex I 23 kDa subunit family. NDH-1 is composed of 14 different subunits. Subunits NuoA, H, J, K, L, M, N constitute the membrane sector of the complex. It depends on [4Fe-4S] cluster as a cofactor.

The protein resides in the cell inner membrane. It catalyses the reaction a quinone + NADH + 5 H(+)(in) = a quinol + NAD(+) + 4 H(+)(out). NDH-1 shuttles electrons from NADH, via FMN and iron-sulfur (Fe-S) centers, to quinones in the respiratory chain. The immediate electron acceptor for the enzyme in this species is believed to be ubiquinone. Couples the redox reaction to proton translocation (for every two electrons transferred, four hydrogen ions are translocated across the cytoplasmic membrane), and thus conserves the redox energy in a proton gradient. This is NADH-quinone oxidoreductase subunit I 2 from Rhizobium meliloti (strain 1021) (Ensifer meliloti).